A 327-amino-acid polypeptide reads, in one-letter code: L-lactate dehydrogenase (327 aa).

NAD(+) contacts are provided by residues Val18, Asp39, Lys44, Tyr69, and 83-84 (GA). Substrate-binding positions include Gln86, Arg92, and 124–127 (NPVD). NAD(+) contacts are provided by residues 122–124 (AAN) and Ser147. 152-155 (DSAR) contacts substrate. Residues Arg157 and His172 each coordinate beta-D-fructose 1,6-bisphosphate. His179 (proton acceptor) is an active-site residue. Residue Tyr224 is modified to Phosphotyrosine. Thr233 provides a ligand contact to substrate.

This sequence belongs to the LDH/MDH superfamily. LDH family. As to quaternary structure, homotetramer.

The protein resides in the cytoplasm. The catalysed reaction is (S)-lactate + NAD(+) = pyruvate + NADH + H(+). Its pathway is fermentation; pyruvate fermentation to lactate; (S)-lactate from pyruvate: step 1/1. Allosterically activated by fructose 1,6-bisphosphate (FBP). Its function is as follows. Catalyzes the conversion of lactate to pyruvate. The protein is L-lactate dehydrogenase of Streptococcus equi subsp. equi (strain 4047).